Reading from the N-terminus, the 612-residue chain is Dihydroxy-acid dehydratase (612 aa).

D81 provides a ligand contact to Mg(2+). Residue C122 participates in [2Fe-2S] cluster binding. Positions 123 and 124 each coordinate Mg(2+). K124 bears the N6-carboxylysine mark. C195 lines the [2Fe-2S] cluster pocket. Mg(2+) is bound at residue E491. S517 acts as the Proton acceptor in catalysis.

It belongs to the IlvD/Edd family. As to quaternary structure, homodimer. It depends on [2Fe-2S] cluster as a cofactor. Mg(2+) is required as a cofactor.

The enzyme catalyses (2R)-2,3-dihydroxy-3-methylbutanoate = 3-methyl-2-oxobutanoate + H2O. The catalysed reaction is (2R,3R)-2,3-dihydroxy-3-methylpentanoate = (S)-3-methyl-2-oxopentanoate + H2O. The protein operates within amino-acid biosynthesis; L-isoleucine biosynthesis; L-isoleucine from 2-oxobutanoate: step 3/4. It functions in the pathway amino-acid biosynthesis; L-valine biosynthesis; L-valine from pyruvate: step 3/4. Its function is as follows. Functions in the biosynthesis of branched-chain amino acids. Catalyzes the dehydration of (2R,3R)-2,3-dihydroxy-3-methylpentanoate (2,3-dihydroxy-3-methylvalerate) into 2-oxo-3-methylpentanoate (2-oxo-3-methylvalerate) and of (2R)-2,3-dihydroxy-3-methylbutanoate (2,3-dihydroxyisovalerate) into 2-oxo-3-methylbutanoate (2-oxoisovalerate), the penultimate precursor to L-isoleucine and L-valine, respectively. The protein is Dihydroxy-acid dehydratase of Rhizobium leguminosarum bv. trifolii (strain WSM2304).